A 336-amino-acid chain; its full sequence is MRRAAVLTAGSWGSVFAKVLADAGARVNLVARDPEIVRAVNTRQVNPRYLPAIQLPDRVRAMSDAGEALAGAEFVVLAVPSQALRSVLAGWAPLIGPDAVYVSLMKGVEVGSQLRMSEVITQVTGVSPDRIAVVSGPNLAPEIAAEQPAATVVASTSTSTAEAVQAACWTPYFRPYTNTDVIGCELGGAIKNVIALAAGMLEGMGFGTNSLASLMTRGLAETLRLGVALGADPMTFAGLAGLGDLVATCGSPLSRNRTFGEKLGRGLTLAQVEAEQQQVAEGVRSCRPLLAMADDLGVAMPITRQVERVLYEGLPPMEAVKDLMSREPGPEYRLRP.

NADPH-binding residues include Ser-11, Trp-12, Arg-32, and Lys-106. 2 residues coordinate sn-glycerol 3-phosphate: Lys-106 and Gly-136. NADPH is bound at residue Ala-140. Sn-glycerol 3-phosphate is bound by residues Lys-191, Asp-244, Ser-254, Arg-255, and Asn-256. Lys-191 functions as the Proton acceptor in the catalytic mechanism. Arg-255 lines the NADPH pocket. NADPH-binding residues include Val-279 and Glu-281.

The protein belongs to the NAD-dependent glycerol-3-phosphate dehydrogenase family.

It is found in the cytoplasm. It catalyses the reaction sn-glycerol 3-phosphate + NAD(+) = dihydroxyacetone phosphate + NADH + H(+). The enzyme catalyses sn-glycerol 3-phosphate + NADP(+) = dihydroxyacetone phosphate + NADPH + H(+). It participates in membrane lipid metabolism; glycerophospholipid metabolism. Catalyzes the reduction of the glycolytic intermediate dihydroxyacetone phosphate (DHAP) to sn-glycerol 3-phosphate (G3P), the key precursor for phospholipid synthesis. The chain is Glycerol-3-phosphate dehydrogenase [NAD(P)+] from Frankia casuarinae (strain DSM 45818 / CECT 9043 / HFP020203 / CcI3).